Reading from the N-terminus, the 358-residue chain is 5,10-methenyltetrahydromethanopterin hydrogenase (358 aa).

This sequence belongs to the HMD family. Homotetramer.

It catalyses the reaction 5,10-methenyl-5,6,7,8-tetrahydromethanopterin + H2 = 5,10-methylenetetrahydromethanopterin + H(+). The protein operates within one-carbon metabolism; methanogenesis from CO(2); 5,10-methylene-5,6,7,8-tetrahydromethanopterin from 5,10-methenyl-5,6,7,8-tetrahydromethanopterin (hydrogen route): step 1/1. Its activity is regulated as follows. Activity requires salt; 100 mM potassium phosphate, potassium chloride, and sodium chloride are equally effective. In terms of biological role, catalyzes the reversible reduction of methenyl-H(4)MPT(+) to methylene-H(4)MPT. In Methanopyrus kandleri (strain AV19 / DSM 6324 / JCM 9639 / NBRC 100938), this protein is 5,10-methenyltetrahydromethanopterin hydrogenase.